Reading from the N-terminus, the 209-residue chain is Small ribosomal subunit protein mS23 (209 aa).

Belongs to the mitochondrion-specific ribosomal protein mS23 family. Component of the mitochondrial small ribosomal subunit.

The protein resides in the mitochondrion. The sequence is that of Small ribosomal subunit protein mS23 (rsm25) from Sclerotinia sclerotiorum (strain ATCC 18683 / 1980 / Ss-1) (White mold).